The sequence spans 142 residues: Hemoglobin subunit alpha (142 aa).

Residues 2–142 (VLSAADKTNV…LSTVLTSKYR (141 aa)) enclose the Globin domain. Ser4 carries the post-translational modification Phosphoserine. Lys8 carries the post-translational modification N6-succinyllysine. The residue at position 9 (Thr9) is a Phosphothreonine. Lys12 carries the post-translational modification N6-succinyllysine. Residue Lys17 is modified to N6-acetyllysine; alternate. An N6-succinyllysine; alternate modification is found at Lys17. Position 25 is a phosphotyrosine (Tyr25). A Phosphoserine modification is found at Ser36. Lys41 is modified (N6-succinyllysine). Ser50 carries the phosphoserine modification. Gln59 lines the O2 pocket. His88 contributes to the heme b binding site. Thr109 bears the Phosphothreonine mark. Position 125 is a phosphoserine (Ser125). Thr135 and Thr138 each carry phosphothreonine. The residue at position 139 (Ser139) is a Phosphoserine.

This sequence belongs to the globin family. Heterotetramer of two alpha chains and two beta chains. Red blood cells.

Involved in oxygen transport from the lung to the various peripheral tissues. In terms of biological role, hemopressin acts as an antagonist peptide of the cannabinoid receptor CNR1. Hemopressin-binding efficiently blocks cannabinoid receptor CNR1 and subsequent signaling. This is Hemoglobin subunit alpha (HBA) from Monodelphis domestica (Gray short-tailed opossum).